We begin with the raw amino-acid sequence, 98 residues long: EKC/KEOPS complex subunit GON7 (98 aa).

The residue at position 1 (M1) is an N-acetylmethionine. The disordered stretch occupies residues 55-98; it reads DAQGLAEDPDDALDGDDEDDAEDENNSGRTNSDGPSAKRPKPAS. A compositionally biased stretch (acidic residues) spans 61–79; sequence EDPDDALDGDDEDDAEDEN.

As to quaternary structure, component of the EKC/KEOPS complex composed of at least GON7, TP53RK, TPRKB, OSGEP and LAGE3; the whole complex dimerizes.

The protein localises to the nucleus. In terms of biological role, component of the EKC/KEOPS complex that is required for the formation of a threonylcarbamoyl group on adenosine at position 37 (t(6)A37) in tRNAs that read codons beginning with adenine. The complex is probably involved in the transfer of the threonylcarbamoyl moiety of threonylcarbamoyl-AMP (TC-AMP) to the N6 group of A37. GON7 plays a supporting role to the catalytic subunit OSGEP in the complex. The chain is EKC/KEOPS complex subunit GON7 from Mus musculus (Mouse).